The chain runs to 223 residues: Phosphoribosylformylglycinamidine synthase subunit PurQ (223 aa).

Residues 3–223 enclose the Glutamine amidotransferase type-1 domain; it reads FAVLVFPGSN…MVNSWREQNV (221 aa). Cys-85 serves as the catalytic Nucleophile. Residues His-193 and Glu-195 contribute to the active site.

In terms of assembly, part of the FGAM synthase complex composed of 1 PurL, 1 PurQ and 2 PurS subunits.

It localises to the cytoplasm. It catalyses the reaction N(2)-formyl-N(1)-(5-phospho-beta-D-ribosyl)glycinamide + L-glutamine + ATP + H2O = 2-formamido-N(1)-(5-O-phospho-beta-D-ribosyl)acetamidine + L-glutamate + ADP + phosphate + H(+). It carries out the reaction L-glutamine + H2O = L-glutamate + NH4(+). Its pathway is purine metabolism; IMP biosynthesis via de novo pathway; 5-amino-1-(5-phospho-D-ribosyl)imidazole from N(2)-formyl-N(1)-(5-phospho-D-ribosyl)glycinamide: step 1/2. Functionally, part of the phosphoribosylformylglycinamidine synthase complex involved in the purines biosynthetic pathway. Catalyzes the ATP-dependent conversion of formylglycinamide ribonucleotide (FGAR) and glutamine to yield formylglycinamidine ribonucleotide (FGAM) and glutamate. The FGAM synthase complex is composed of three subunits. PurQ produces an ammonia molecule by converting glutamine to glutamate. PurL transfers the ammonia molecule to FGAR to form FGAM in an ATP-dependent manner. PurS interacts with PurQ and PurL and is thought to assist in the transfer of the ammonia molecule from PurQ to PurL. In Staphylococcus haemolyticus (strain JCSC1435), this protein is Phosphoribosylformylglycinamidine synthase subunit PurQ.